The chain runs to 253 residues: Bacitracin export ATP-binding protein BceA (253 aa).

The ABC transporter domain maps to 4–243 (LEATNIHKSY…TFFKDIMKTQ (240 aa)). An ATP-binding site is contributed by 40–47 (GASGSGKT).

This sequence belongs to the ABC transporter superfamily. As to quaternary structure, the complex is composed of two ATP-binding proteins (BceA) and two transmembrane proteins (BceB).

In terms of biological role, part of the ABC transporter complex BceAB (TC 3.A.1.123.5) involved in bacitracin export. Responsible for energy coupling to the transport system. This chain is Bacitracin export ATP-binding protein BceA (bceA), found in Halalkalibacterium halodurans (strain ATCC BAA-125 / DSM 18197 / FERM 7344 / JCM 9153 / C-125) (Bacillus halodurans).